The primary structure comprises 205 residues: Small ribosomal subunit protein uS4 (205 aa).

The region spanning Ser94 to Val172 is the S4 RNA-binding domain.

The protein belongs to the universal ribosomal protein uS4 family. In terms of assembly, part of the 30S ribosomal subunit. Contacts protein S5. The interaction surface between S4 and S5 is involved in control of translational fidelity.

Functionally, one of the primary rRNA binding proteins, it binds directly to 16S rRNA where it nucleates assembly of the body of the 30S subunit. With S5 and S12 plays an important role in translational accuracy. The sequence is that of Small ribosomal subunit protein uS4 from Rickettsia bellii (strain OSU 85-389).